A 252-amino-acid chain; its full sequence is Imidazole glycerol phosphate synthase subunit HisF (252 aa).

Catalysis depends on residues D11 and D130.

The protein belongs to the HisA/HisF family. As to quaternary structure, heterodimer of HisH and HisF.

The protein localises to the cytoplasm. The enzyme catalyses 5-[(5-phospho-1-deoxy-D-ribulos-1-ylimino)methylamino]-1-(5-phospho-beta-D-ribosyl)imidazole-4-carboxamide + L-glutamine = D-erythro-1-(imidazol-4-yl)glycerol 3-phosphate + 5-amino-1-(5-phospho-beta-D-ribosyl)imidazole-4-carboxamide + L-glutamate + H(+). Its pathway is amino-acid biosynthesis; L-histidine biosynthesis; L-histidine from 5-phospho-alpha-D-ribose 1-diphosphate: step 5/9. In terms of biological role, IGPS catalyzes the conversion of PRFAR and glutamine to IGP, AICAR and glutamate. The HisF subunit catalyzes the cyclization activity that produces IGP and AICAR from PRFAR using the ammonia provided by the HisH subunit. The polypeptide is Imidazole glycerol phosphate synthase subunit HisF (Rhodospirillum rubrum (strain ATCC 11170 / ATH 1.1.1 / DSM 467 / LMG 4362 / NCIMB 8255 / S1)).